The primary structure comprises 288 residues: Quinate/shikimate dehydrogenase (288 aa).

Substrate is bound by residues lysine 71 and aspartate 107. Residues 132–135, 155–158, lysine 205, 232–235, and glycine 255 contribute to the NAD(+) site; these read AGGA, NRRD, and CVYN.

The protein belongs to the shikimate dehydrogenase family. As to quaternary structure, homodimer.

It catalyses the reaction L-quinate + NAD(+) = 3-dehydroquinate + NADH + H(+). It carries out the reaction L-quinate + NADP(+) = 3-dehydroquinate + NADPH + H(+). The catalysed reaction is shikimate + NADP(+) = 3-dehydroshikimate + NADPH + H(+). The enzyme catalyses shikimate + NAD(+) = 3-dehydroshikimate + NADH + H(+). Its pathway is metabolic intermediate biosynthesis; chorismate biosynthesis; chorismate from D-erythrose 4-phosphate and phosphoenolpyruvate: step 4/7. The actual biological function of YdiB remains unclear, nor is it known whether 3-dehydroshikimate or quinate represents the natural substrate. Catalyzes the reversible NAD-dependent reduction of both 3-dehydroshikimate (DHSA) and 3-dehydroquinate to yield shikimate (SA) and quinate, respectively. It can use both NAD or NADP for catalysis, however it has higher catalytic efficiency with NAD. This Escherichia coli O17:K52:H18 (strain UMN026 / ExPEC) protein is Quinate/shikimate dehydrogenase.